We begin with the raw amino-acid sequence, 499 residues long: Probable cytosol aminopeptidase (499 aa).

2 residues coordinate Mn(2+): lysine 269 and aspartate 274. Lysine 281 is a catalytic residue. Residues aspartate 292, aspartate 351, and glutamate 353 each coordinate Mn(2+). Arginine 355 is an active-site residue.

The protein belongs to the peptidase M17 family. Mn(2+) is required as a cofactor.

The protein resides in the cytoplasm. It catalyses the reaction Release of an N-terminal amino acid, Xaa-|-Yaa-, in which Xaa is preferably Leu, but may be other amino acids including Pro although not Arg or Lys, and Yaa may be Pro. Amino acid amides and methyl esters are also readily hydrolyzed, but rates on arylamides are exceedingly low.. The catalysed reaction is Release of an N-terminal amino acid, preferentially leucine, but not glutamic or aspartic acids.. Its function is as follows. Presumably involved in the processing and regular turnover of intracellular proteins. Catalyzes the removal of unsubstituted N-terminal amino acids from various peptides. In Actinobacillus pleuropneumoniae serotype 7 (strain AP76), this protein is Probable cytosol aminopeptidase.